Here is a 212-residue protein sequence, read N- to C-terminus: Adenylate kinase (212 aa).

10–15 lines the ATP pocket; sequence GSGKGT. The NMP stretch occupies residues 30–59; that stretch reads STGDLMRKEINDETPLGIECARYMNEGRLV. AMP-binding positions include T31, R36, 57–59, and Q90; that span reads RLV. The segment at 124-161 is LID; that stretch reads GRLICPKCKVSYHIISRKPKLEGICDNDGTELVRRPDD. R125 contacts ATP. Zn(2+) is bound by residues C128 and C131. An ATP-binding site is contributed by 134–135; sequence SY. C148 and D151 together coordinate Zn(2+). AMP-binding residues include R158 and R169. N198 provides a ligand contact to ATP.

It belongs to the adenylate kinase family. As to quaternary structure, monomer.

It is found in the cytoplasm. It carries out the reaction AMP + ATP = 2 ADP. It functions in the pathway purine metabolism; AMP biosynthesis via salvage pathway; AMP from ADP: step 1/1. In terms of biological role, catalyzes the reversible transfer of the terminal phosphate group between ATP and AMP. Plays an important role in cellular energy homeostasis and in adenine nucleotide metabolism. The chain is Adenylate kinase from Mesoplasma florum (strain ATCC 33453 / NBRC 100688 / NCTC 11704 / L1) (Acholeplasma florum).